The primary structure comprises 146 residues: Leptin (146 aa).

The cysteines at positions 96 and 146 are disulfide-linked.

The protein belongs to the leptin family.

It is found in the secreted. Functionally, key player in the regulation of energy balance and body weight control. Once released into the circulation, has central and peripheral effects by binding LEPR, found in many tissues, which results in the activation of several major signaling pathways. In the hypothalamus, acts as an appetite-regulating factor that induces a decrease in food intake and an increase in energy consumption by inducing anorexinogenic factors and suppressing orexigenic neuropeptides, also regulates bone mass and secretion of hypothalamo-pituitary-adrenal hormones. In the periphery, increases basal metabolism, influences reproductive function, regulates pancreatic beta-cell function and insulin secretion, is pro-angiogenic for endothelial cell and affects innate and adaptive immunity. In the arcuate nucleus of the hypothalamus, activates by depolarization POMC neurons inducing FOS and SOCS3 expression to release anorexigenic peptides and inhibits by hyperpolarization NPY neurons inducing SOCS3 with a consequent reduction on release of orexigenic peptides. In addition to its known satiety inducing effect, has a modulatory role in nutrient absorption. In the intestine, reduces glucose absorption by enterocytes by activating PKC and leading to a sequential activation of p38, PI3K and ERK signaling pathways which exerts an inhibitory effect on glucose absorption. Acts as a growth factor on certain tissues, through the activation of different signaling pathways increases expression of genes involved in cell cycle regulation such as CCND1, via JAK2-STAT3 pathway, or VEGFA, via MAPK1/3 and PI3K-AKT1 pathways. May also play an apoptotic role via JAK2-STAT3 pathway and up-regulation of BIRC5 expression. Pro-angiogenic, has mitogenic activity on vascular endothelial cells and plays a role in matrix remodeling by regulating the expression of matrix metalloproteinases (MMPs) and tissue inhibitors of metalloproteinases (TIMPs). In innate immunity, modulates the activity and function of neutrophils by increasing chemotaxis and the secretion of oxygen radicals. Increases phagocytosis by macrophages and enhances secretion of pro-inflammatory mediators. Increases cytotoxic ability of NK cells. Plays a pro-inflammatory role, in synergy with IL1B, by inducing NOS2 which promotes the production of IL6, IL8 and Prostaglandin E2, through a signaling pathway that involves JAK2, PI3K, MAP2K1/MEK1 and MAPK14/p38. In adaptive immunity, promotes the switch of memory T-cells towards T helper-1 cell immune responses. Increases CD4(+)CD25(-) T-cell proliferation and reduces autophagy during TCR (T-cell receptor) stimulation, through MTOR signaling pathway activation and BCL2 up-regulation. The sequence is that of Leptin (LEP) from Pongo pygmaeus (Bornean orangutan).